Here is a 1063-residue protein sequence, read N- to C-terminus: ATP-dependent helicase hrq1 (1063 aa).

The disordered stretch occupies residues 224 to 243 (TQSRKNQPVPPDSPSIPNDS). The Helicase ATP-binding domain maps to 320 to 503 (INHLWNGFHV…KIFGVDNIKL (184 aa)). Residue 333-340 (TSTSSGKS) participates in ATP binding. Residues 444–447 (DEAH) carry the DEAH box motif. In terms of domain architecture, Helicase C-terminal spans 539-717 (EASKLLIKFA…ELPINIRSDE (179 aa)).

Belongs to the helicase family. HRQ1 subfamily. In terms of assembly, forms heptamer rings. Interacts with rhp14. The cofactor is Mg(2+).

The protein resides in the nucleus. The enzyme catalyses Couples ATP hydrolysis with the unwinding of duplex DNA by translocating in the 3'-5' direction.. It carries out the reaction ATP + H2O = ADP + phosphate + H(+). Functionally, helicase with 3'-5' helicase activity involved in genome stability. Functions in the nucleotide excision repair (NER) pathway and plays a critical role in DNA interstrand cross-link repair. Unwinds relatively long duplex DNA up to 120-bp and requires a long 3'-tail of at least 70 nucleotides for efficient unwinding of duplex DNA. Shows both processive helicase and DNA strand annealing activities. Affects telomere length by a non-catalytic mechanism, probably through inhibiting telomerase by competing with it for ssDNA binding. This Schizosaccharomyces pombe (strain 972 / ATCC 24843) (Fission yeast) protein is ATP-dependent helicase hrq1.